A 149-amino-acid chain; its full sequence is UPF0178 protein Cphy_3042 (149 aa).

Residues 112-128 are compositionally biased toward basic residues; that stretch reads QRRHGKQNLHSKNNKKR. Residues 112-132 are disordered; sequence QRRHGKQNLHSKNNKKRTTGD.

This sequence belongs to the UPF0178 family.

In Lachnoclostridium phytofermentans (strain ATCC 700394 / DSM 18823 / ISDg) (Clostridium phytofermentans), this protein is UPF0178 protein Cphy_3042.